The sequence spans 438 residues: Phospholipase D Y (438 aa).

Positions 1-19 are cleaved as a signal peptide; sequence MIINRLFIIIVLFFVNVNS. A glycan (N-linked (GlcNAc...) asparagine) is linked at N50. One can recognise a PLD phosphodiesterase 1 domain in the interval 145-172; it reads GSGVLHTKLIIIDESSAYVGSANADWSS. Catalysis depends on residues H150, K152, and D157. N-linked (GlcNAc...) asparagine glycosylation is found at N223, N336, and N394. The 27-residue stretch at 373-399 folds into the PLD phosphodiesterase 2 domain; sequence YTRVNHAKFMVTEKQSYVGTSNWSQDY.

The protein belongs to the phospholipase D family.

It carries out the reaction a 1,2-diacyl-sn-glycero-3-phosphocholine + H2O = a 1,2-diacyl-sn-glycero-3-phosphate + choline + H(+). Its activity is regulated as follows. Inhibited by butan-1-ol. In terms of biological role, hydrolyzes membrane phospholipids, such as PtdCho (phosphatidylcholine), producing the free headgroup and PtdOH (phosphatidic acid; signaling molecule on its own). In Dictyostelium discoideum (Social amoeba), this protein is Phospholipase D Y (pldY).